A 267-amino-acid polypeptide reads, in one-letter code: Translation initiation factor 2 subunit alpha (267 aa).

Residues 12-83 (GEYVIATVKE…RRKTVDVSLK (72 aa)) enclose the S1 motif domain.

This sequence belongs to the eIF-2-alpha family. As to quaternary structure, heterotrimer composed of an alpha, a beta and a gamma chain.

EIF-2 functions in the early steps of protein synthesis by forming a ternary complex with GTP and initiator tRNA. The protein is Translation initiation factor 2 subunit alpha of Staphylothermus marinus (strain ATCC 43588 / DSM 3639 / JCM 9404 / F1).